The primary structure comprises 215 residues: Pyrrolidone-carboxylate peptidase (215 aa).

Residues glutamate 80, cysteine 143, and histidine 167 contribute to the active site.

Belongs to the peptidase C15 family. In terms of assembly, homotetramer.

The protein localises to the cytoplasm. The catalysed reaction is Release of an N-terminal pyroglutamyl group from a polypeptide, the second amino acid generally not being Pro.. Removes 5-oxoproline from various penultimate amino acid residues except L-proline. The sequence is that of Pyrrolidone-carboxylate peptidase from Bacillus cereus (strain B4264).